Reading from the N-terminus, the 133-residue chain is Mediator of RNA polymerase II transcription subunit 10 (133 aa).

Belongs to the Mediator complex subunit 10 family. In terms of assembly, component of the Mediator complex. Interacts with MED4 and MED21.

It is found in the nucleus. Component of the Mediator complex, a coactivator involved in the regulated transcription of nearly all RNA polymerase II-dependent genes. Mediator functions as a bridge to convey information from gene-specific regulatory proteins to the basal RNA polymerase II transcription machinery. Mediator is recruited to promoters by direct interactions with regulatory proteins and serves as a scaffold for the assembly of a functional preinitiation complex with RNA polymerase II and the general transcription factors. Required for activated transcription of the MtnA, MtnB and MtnD genes. This is Mediator of RNA polymerase II transcription subunit 10 (MED10) from Drosophila melanogaster (Fruit fly).